The following is a 60-amino-acid chain: Large ribosomal subunit protein uL30 (60 aa).

It belongs to the universal ribosomal protein uL30 family. Part of the 50S ribosomal subunit.

The polypeptide is Large ribosomal subunit protein uL30 (Dehalococcoides mccartyi (strain CBDB1)).